The sequence spans 571 residues: Proline--tRNA ligase (571 aa).

Belongs to the class-II aminoacyl-tRNA synthetase family. ProS type 1 subfamily. In terms of assembly, homodimer.

It is found in the cytoplasm. The enzyme catalyses tRNA(Pro) + L-proline + ATP = L-prolyl-tRNA(Pro) + AMP + diphosphate. Functionally, catalyzes the attachment of proline to tRNA(Pro) in a two-step reaction: proline is first activated by ATP to form Pro-AMP and then transferred to the acceptor end of tRNA(Pro). As ProRS can inadvertently accommodate and process non-cognate amino acids such as alanine and cysteine, to avoid such errors it has two additional distinct editing activities against alanine. One activity is designated as 'pretransfer' editing and involves the tRNA(Pro)-independent hydrolysis of activated Ala-AMP. The other activity is designated 'posttransfer' editing and involves deacylation of mischarged Ala-tRNA(Pro). The misacylated Cys-tRNA(Pro) is not edited by ProRS. This is Proline--tRNA ligase from Ectopseudomonas mendocina (strain ymp) (Pseudomonas mendocina).